We begin with the raw amino-acid sequence, 336 residues long: MLSYAPENAYQRASTMENKKVFPKEKSGLHPRNRHRSRYDFDALSVSCPELIPFLAPTAYGDISVDFADPLAVKMLNKALLKHFYGIEYWDIPADSLCPPIPGRADYVHHLADLLASCNGEVIPKGKNIALLDIGVGANCIYPIIGQREYGWRFTGTDIDSHALSAAKMVVSMNPTLKNTLRLKQQKDPHAIFEGVWAVNERYDATLCNPPFHGSAEEAAATTRRKLHKLGKNEVAAKPVQNFGGKNSELWCEGGEEGFVSRMVAESVAKAQNCFWFTSLISKKTTLPAIYHALRYVKAVEVRTIEMAQGQKVSRFVAWTFLTLEQQAAWVAERWA.

This sequence belongs to the methyltransferase superfamily. METTL16/RlmF family.

It localises to the cytoplasm. It catalyses the reaction adenosine(1618) in 23S rRNA + S-adenosyl-L-methionine = N(6)-methyladenosine(1618) in 23S rRNA + S-adenosyl-L-homocysteine + H(+). In terms of biological role, specifically methylates the adenine in position 1618 of 23S rRNA. This chain is Ribosomal RNA large subunit methyltransferase F, found in Yersinia pestis (strain Pestoides F).